The primary structure comprises 468 residues: 6-phospho-beta-galactosidase (468 aa).

5 residues coordinate D-galactose 6-phosphate: Q19, H116, N159, E160, and N297. The active-site Proton donor is E160. Catalysis depends on E375, which acts as the Nucleophile. D-galactose 6-phosphate-binding residues include S428, W429, K435, and Y437.

Belongs to the glycosyl hydrolase 1 family.

It carries out the reaction a 6-phospho-beta-D-galactoside + H2O = D-galactose 6-phosphate + an alcohol. Its pathway is carbohydrate metabolism; lactose degradation; D-galactose 6-phosphate and beta-D-glucose from lactose 6-phosphate: step 1/1. This is 6-phospho-beta-galactosidase from Streptococcus pyogenes serotype M18 (strain MGAS8232).